The chain runs to 493 residues: Activin receptor type-1C (493 aa).

Positions 1-20 are cleaved as a signal peptide; it reads MTRALCSALRQALLLLAAAA. At 22–113 the chain is on the extracellular side; sequence LSPGLKCVCL…PNAPKLGPME (92 aa). A helical transmembrane segment spans residues 114–134; sequence LAIIITVPVCLLSIAAMLTVW. Residues 135–493 lie on the Cytoplasmic side of the membrane; it reads ACQGRQCSYR…QLCVKEDCKA (359 aa). Residues 165-194 form the GS domain; it reads KTLKDLIYDVTASGSGSGLPLLVQRTIART. The region spanning 195-485 is the Protein kinase domain; it reads IVLQEIVGKG…LRIKKTISQL (291 aa). Residues 201-209 and Lys-222 contribute to the ATP site; that span reads VGKGRFGEV. Residue Asp-323 is the Proton acceptor of the active site.

Belongs to the protein kinase superfamily. TKL Ser/Thr protein kinase family. TGFB receptor subfamily. As to quaternary structure, binds the type 2 receptor protein ACVR2A. Mg(2+) serves as cofactor. Mn(2+) is required as a cofactor. As to expression, present in pancreas, heart, colon, small intestine, ovary and the hippocampus, medulla oblongata and putamen of the brain. Isoform 1, isoform 2, isoform 3 and isoform 4 are all expressed in the placenta throughout pregnancy.

The protein localises to the membrane. The catalysed reaction is L-threonyl-[receptor-protein] + ATP = O-phospho-L-threonyl-[receptor-protein] + ADP + H(+). It carries out the reaction L-seryl-[receptor-protein] + ATP = O-phospho-L-seryl-[receptor-protein] + ADP + H(+). Serine/threonine protein kinase which forms a receptor complex on ligand binding. The receptor complex consists of 2 type II and 2 type I transmembrane serine/threonine kinases. Type II receptors phosphorylate and activate type I receptors which autophosphorylate, then bind and activate SMAD transcriptional regulators, SMAD2 and SMAD3. Receptor for activin AB, activin B, activin E and NODAL. Upon NODAL binding, activation results in increased apoptosis and reduced proliferation through suppression of AKT signaling and the activation of Smad2-dependent signaling pathway in pancreatic beta-cells, trophoblasts, epithelial or neuronal cells. Acts as a positive regulator for macrophage activation partially through down-regulation of PPARG expression. The protein is Activin receptor type-1C of Homo sapiens (Human).